The sequence spans 238 residues: TATA-box-binding protein (238 aa).

The tract at residues 1-58 (MDLKLPPTNPTNPQQAKTFMKSIEEDEKNKAEDLDIIKKEDIDEPKQEDTTDGNGGGG) is disordered. The segment covering 27–49 (EKNKAEDLDIIKKEDIDEPKQED) has biased composition (basic and acidic residues). A run of 2 repeats spans residues 65–141 (LQNI…ARII) and 155–232 (IQNI…YPVL).

The protein belongs to the TBP family. As to quaternary structure, belongs to the TFIID complex together with the TBP-associated factors (TAFs). Binds DNA as monomer.

Its subcellular location is the nucleus. General transcription factor that functions at the core of the DNA-binding multiprotein factor TFIID. Binding of TFIID to the TATA box is the initial transcriptional step of the pre-initiation complex (PIC), playing a role in the activation of eukaryotic genes transcribed by RNA polymerase II. This chain is TATA-box-binding protein (TBP1), found in Candida albicans (strain SC5314 / ATCC MYA-2876) (Yeast).